A 402-amino-acid polypeptide reads, in one-letter code: Probable sugar efflux transporter (402 aa).

Helical transmembrane passes span valine 15–methionine 35, glycine 51–alanine 71, leucine 84–leucine 104, methionine 109–isoleucine 129, glutamine 137–glycine 157, valine 168–leucine 188, proline 209–tyrosine 229, asparagine 245–phenylalanine 265, phenylalanine 276–glutamate 296, alanine 297–leucine 317, valine 333–glycine 353, and isoleucine 365–leucine 385.

It belongs to the major facilitator superfamily. SotB (TC 2.A.1.2) family.

Its subcellular location is the cell inner membrane. Its function is as follows. Involved in the efflux of sugars. The physiological role may be the reduction of the intracellular concentration of toxic sugars or sugar metabolites. This chain is Probable sugar efflux transporter, found in Haemophilus influenzae (strain 86-028NP).